The following is a 540-amino-acid chain: 2-succinyl-5-enolpyruvyl-6-hydroxy-3-cyclohexene-1-carboxylate synthase (540 aa).

Belongs to the TPP enzyme family. MenD subfamily. Homodimer. Requires Mg(2+) as cofactor. Mn(2+) is required as a cofactor. Thiamine diphosphate serves as cofactor.

It catalyses the reaction isochorismate + 2-oxoglutarate + H(+) = 5-enolpyruvoyl-6-hydroxy-2-succinyl-cyclohex-3-ene-1-carboxylate + CO2. It participates in quinol/quinone metabolism; 1,4-dihydroxy-2-naphthoate biosynthesis; 1,4-dihydroxy-2-naphthoate from chorismate: step 2/7. It functions in the pathway quinol/quinone metabolism; menaquinone biosynthesis. Functionally, catalyzes the thiamine diphosphate-dependent decarboxylation of 2-oxoglutarate and the subsequent addition of the resulting succinic semialdehyde-thiamine pyrophosphate anion to isochorismate to yield 2-succinyl-5-enolpyruvyl-6-hydroxy-3-cyclohexene-1-carboxylate (SEPHCHC). The polypeptide is 2-succinyl-5-enolpyruvyl-6-hydroxy-3-cyclohexene-1-carboxylate synthase (Mycobacteroides abscessus (strain ATCC 19977 / DSM 44196 / CCUG 20993 / CIP 104536 / JCM 13569 / NCTC 13031 / TMC 1543 / L948) (Mycobacterium abscessus)).